Consider the following 445-residue polypeptide: Phosphoglucosamine mutase (445 aa).

S101 (phosphoserine intermediate) is an active-site residue. Mg(2+)-binding residues include S101, D240, D242, and D244. S101 bears the Phosphoserine mark.

The protein belongs to the phosphohexose mutase family. It depends on Mg(2+) as a cofactor. Activated by phosphorylation.

The catalysed reaction is alpha-D-glucosamine 1-phosphate = D-glucosamine 6-phosphate. Functionally, catalyzes the conversion of glucosamine-6-phosphate to glucosamine-1-phosphate. In Ectopseudomonas mendocina (strain ymp) (Pseudomonas mendocina), this protein is Phosphoglucosamine mutase.